A 327-amino-acid chain; its full sequence is Aldo-keto reductase FVEG_12638 (327 aa).

Asp51 is a binding site for NADP(+). Catalysis depends on Tyr56, which acts as the Proton donor. His122 provides a ligand contact to substrate. NADP(+)-binding positions include 152-153 (SE), 202-212 (GPLGHGWLVED), and 286-294 (ENFTSRDIE).

Belongs to the aldo/keto reductase family. Aldo/keto reductase 2 subfamily.

In terms of biological role, aldo-keto reductase; part of the Fusarium detoxification of benzoxazolinone cluster 2 (FDB2) involved in the degradation of benzoxazolinones produced by the host plant. Maize, wheat, and rye produce the 2 benzoxazinone phytoanticipins 2,4-dihy-droxy-7-methoxy-1,4-benzoxazin-3-one (DIMBOA) and 2,4-dihydroxy-1,4-benzoxazin-3-one (DIBOA) that, due to their inherent instability once released, spontaneously degrade to the more stable corresponding benzoxazolinones, 6-methoxy-2-benzoxazolinone (MBOA) and 2-benzoxazolinone (BOA), respectively. The first step in the detoxification of benzoxazolinones involves the hydrolysis of the cyclic ester bond of benzoxazolinones by the FDB1 cluster gamma-lactamase MBL1 to aminophenols. MBL1 is able to convert BOA into 2-aminophenol (2-AP), as well as MBOA into 5-methoxy-2-aminophenol (2-AMP). The FDB2 cluster N-malonyltransferase FDB2/NAT1 then metabolizes aminophenols via N-malonylation to non-toxic malonamic acids. FDB2/NAT1 converts 2-AP into N-(2-hydroxyphenyl) malonamic acid (HPMA) and 2-AMP into N-(2-hydroxy-4-methoxyphenyl) malonamic acid (HMPMA). The duplicated dienlactone hydrolases DLH1 and DLH2 may provide redundant function for hydrolyzing the lactone moiety in the BOA molecule. The roles of the amidases an other enzymes encoded by the 2 FDB clusters have not been identified so far. The sequence is that of Aldo-keto reductase FVEG_12638 from Gibberella moniliformis (strain M3125 / FGSC 7600) (Maize ear and stalk rot fungus).